The following is a 126-amino-acid chain: Protein ApaG (126 aa).

Residues 2 to 126 (SDPRYQIDVS…FRLAVPGALH (125 aa)) enclose the ApaG domain.

The protein is Protein ApaG of Azotobacter vinelandii (strain DJ / ATCC BAA-1303).